Reading from the N-terminus, the 449-residue chain is Biotin carboxylase (449 aa).

The 445-residue stretch at 1–445 (MLDKIVIANR…NIHYLEKKLG (445 aa)) folds into the Biotin carboxylation domain. ATP is bound by residues Lys116, Lys159, 165 to 166 (GG), 201 to 204 (EKYL), His209, and His236. Positions 120–317 (IAAMKKAGVP…LIKEQLRIAA (198 aa)) constitute an ATP-grasp domain. Lys238 serves as a coordination point for hydrogencarbonate. Residues Glu276 and Glu288 each coordinate ATP. The Mg(2+) site is built by Glu276, Glu288, and Asn290. Positions 276, 288, and 290 each coordinate Mn(2+). Residues Arg292, Val295, and Arg338 each coordinate hydrogencarbonate. The active site involves Arg292. Arg338 contacts biotin.

Acetyl-CoA carboxylase is a heterohexamer of biotin carboxyl carrier protein, biotin carboxylase and the two subunits of carboxyl transferase in a 2:2 complex. Mg(2+) serves as cofactor. It depends on Mn(2+) as a cofactor.

The enzyme catalyses N(6)-biotinyl-L-lysyl-[protein] + hydrogencarbonate + ATP = N(6)-carboxybiotinyl-L-lysyl-[protein] + ADP + phosphate + H(+). It functions in the pathway lipid metabolism; malonyl-CoA biosynthesis; malonyl-CoA from acetyl-CoA: step 1/1. Its function is as follows. This protein is a component of the acetyl coenzyme A carboxylase complex; first, biotin carboxylase catalyzes the carboxylation of the carrier protein and then the transcarboxylase transfers the carboxyl group to form malonyl-CoA. The polypeptide is Biotin carboxylase (accC) (Escherichia coli O157:H7).